Consider the following 253-residue polypeptide: Imidazole glycerol phosphate synthase subunit HisF (253 aa).

Catalysis depends on residues aspartate 12 and aspartate 131.

Belongs to the HisA/HisF family. As to quaternary structure, heterodimer of HisH and HisF.

Its subcellular location is the cytoplasm. It carries out the reaction 5-[(5-phospho-1-deoxy-D-ribulos-1-ylimino)methylamino]-1-(5-phospho-beta-D-ribosyl)imidazole-4-carboxamide + L-glutamine = D-erythro-1-(imidazol-4-yl)glycerol 3-phosphate + 5-amino-1-(5-phospho-beta-D-ribosyl)imidazole-4-carboxamide + L-glutamate + H(+). The protein operates within amino-acid biosynthesis; L-histidine biosynthesis; L-histidine from 5-phospho-alpha-D-ribose 1-diphosphate: step 5/9. Its function is as follows. IGPS catalyzes the conversion of PRFAR and glutamine to IGP, AICAR and glutamate. The HisF subunit catalyzes the cyclization activity that produces IGP and AICAR from PRFAR using the ammonia provided by the HisH subunit. The sequence is that of Imidazole glycerol phosphate synthase subunit HisF from Corynebacterium urealyticum (strain ATCC 43042 / DSM 7109).